The sequence spans 111 residues: Large ribosomal subunit protein uL22 (111 aa).

The protein belongs to the universal ribosomal protein uL22 family. In terms of assembly, part of the 50S ribosomal subunit.

Its function is as follows. This protein binds specifically to 23S rRNA; its binding is stimulated by other ribosomal proteins, e.g. L4, L17, and L20. It is important during the early stages of 50S assembly. It makes multiple contacts with different domains of the 23S rRNA in the assembled 50S subunit and ribosome. The globular domain of the protein is located near the polypeptide exit tunnel on the outside of the subunit, while an extended beta-hairpin is found that lines the wall of the exit tunnel in the center of the 70S ribosome. This is Large ribosomal subunit protein uL22 from Alkalilimnicola ehrlichii (strain ATCC BAA-1101 / DSM 17681 / MLHE-1).